A 127-amino-acid polypeptide reads, in one-letter code: HTH-type transcriptional regulator ImmR (127 aa).

Residues 1–12 (MSLGKRLKEARQ) are compositionally biased toward basic and acidic residues. Residues 1–22 (MSLGKRLKEARQKAGYTQKEAA) form a disordered region. Positions 7 to 61 (LKEARQKAGYTQKEAAEKLNIGNNNLSNYERDYRDPDTDTLLKLSNLYNVSTDYL) constitute an HTH cro/C1-type domain. The segment at residues 18-37 (QKEAAEKLNIGNNNLSNYER) is a DNA-binding region (H-T-H motif).

The sequence is that of HTH-type transcriptional regulator ImmR (immR) from Bacillus subtilis (strain 168).